The following is a 217-amino-acid chain: NADPH-dependent 3-demethoxyubiquinone 3-hydroxylase, mitochondrial (217 aa).

A mitochondrion-targeting transit peptide spans 1–35 (MSCAGAAAAPRLWRLRPGARRSLSAYGRRTSVRFR). A required for nuclear localization region spans residues 11–29 (RLWRLRPGARRSLSAYGRR). Tandem repeats lie at residues 48–129 (AVDR…TALL) and 130–217 (GKEG…SERL). The segment at 48–217 (AVDRIIRVDH…RVAIYLSERL (170 aa)) is 2 X approximate tandem repeats. Residue Arg51 coordinates NADH. 6 residues coordinate Fe cation: Glu60, Glu90, His93, Glu142, Glu178, and His181. Positions 212 and 216 each coordinate NADH.

Belongs to the COQ7 family. As to quaternary structure, component of a multi-subunit COQ enzyme complex. Interacts with COQ8B and COQ6. Interacts with COQ9. Fe cation serves as cofactor. In terms of tissue distribution, expressed dominantly in heart and skeletal muscle.

The protein localises to the mitochondrion inner membrane. The protein resides in the mitochondrion. It localises to the nucleus. It is found in the chromosome. The catalysed reaction is a 5-methoxy-2-methyl-3-(all-trans-polyprenyl)benzoquinone + NADH + O2 = a 3-demethylubiquinone + NAD(+) + H2O. It functions in the pathway cofactor biosynthesis; ubiquinone biosynthesis. Catalyzes the hydroxylation of the 5-methoxy-2-methyl-3-(all-trans-polyprenyl)benzoquinone at the C6 position and participates in the biosynthesis of ubiquinone. Catalyzes the reaction through a substrate-mediated reduction pathway, whereby NADH shuttles electrons to 5-methoxy-2-methyl-3-(all-trans-decaprenyl)benzoquinone, which then transfers the electrons to the two Fe(3+) centers. The binding of 5-methoxy-2-methyl-3-(all-trans-polyprenyl)benzoquinone (DMQn) mediates reduction of the diiron center by nicotinamide adenine dinucleotide (NADH) and initiates oxygen activation for subsequent DMQ hydroxylation. The physiological substrates are 5-methoxy-2-methyl-3-(all-trans-nonaprenyl)benzoquinone (DMQ(9)) and 5-methoxy-2-methyl-3-(all-trans-decaprenyl)benzoquinone (DMQ(10)), however in vitro the enzyme does not have any specificity concerning the length of the polyprenyl tail, and accepts tails of various lengths with similar efficiency. Also has a structural role in the COQ enzyme complex, stabilizing other COQ polypeptides. Involved in lifespan determination in a ubiquinone-independent manner. Plays a role in modulating mitochondrial stress responses, acting in the nucleus, perhaps via regulating gene expression, independent of its characterized mitochondrial function in ubiquinone biosynthesis. This chain is NADPH-dependent 3-demethoxyubiquinone 3-hydroxylase, mitochondrial, found in Homo sapiens (Human).